Here is a 142-residue protein sequence, read N- to C-terminus: MNEQTILGLDVGERRIGVAISDVEARIAAPLTTIPAHPPERAIAQIARLVAERGVRRVVVGLPLTMRGEHGPQAAAIQRFVDALAAVLNCPVEMFDERLTSVAAEQMLRNLGVKPAKIKEQIDQVAASIILQDYLDARRNPF.

The protein belongs to the YqgF nuclease family.

It localises to the cytoplasm. Could be a nuclease involved in processing of the 5'-end of pre-16S rRNA. The protein is Putative pre-16S rRNA nuclease of Chloroflexus aggregans (strain MD-66 / DSM 9485).